The sequence spans 974 residues: Exocyst complex component 4 (974 aa).

Residue A2 is modified to N-acetylalanine. The residue at position 9 (K9) is an N6-acetyllysine. Phosphoserine is present on residues S32 and S226. A coiled-coil region spans residues 32–114 (STSDDVEDRE…HCKRDELRKL (83 aa)). Phosphothreonine is present on residues T233 and T237. Residue S468 is modified to Phosphoserine.

Belongs to the SEC8 family. In terms of assembly, the exocyst complex is composed of EXOC1, EXOC2, EXOC3, EXOC4, EXOC5, EXOC6, EXOC7 and EXOC8. Interacts with BIRC6/bruce. Interacts with MYRIP. Interacts with SH3BP1; required for the localization of both SH3BP1 and the exocyst to the leading edge of migrating cells. Interacts with SLC6A9.

The protein resides in the midbody. Its subcellular location is the midbody ring. It localises to the cell projection. The protein localises to the cytoplasm. It is found in the cytoskeleton. The protein resides in the microtubule organizing center. Its subcellular location is the centrosome. Its function is as follows. Component of the exocyst complex involved in the docking of exocytic vesicles with fusion sites on the plasma membrane. The chain is Exocyst complex component 4 (EXOC4) from Homo sapiens (Human).